A 404-amino-acid chain; its full sequence is Formate-dependent phosphoribosylglycinamide formyltransferase (404 aa).

N(1)-(5-phospho-beta-D-ribosyl)glycinamide is bound by residues glutamate 25–leucine 26 and glutamate 85. ATP is bound by residues arginine 118, lysine 159, serine 164–glutamine 169, glutamate 199–isoleucine 202, and glutamate 207. An ATP-grasp domain is found at arginine 123–leucine 318. The Mg(2+) site is built by glutamate 277 and glutamate 289. Residues aspartate 296, lysine 365, and arginine 372–arginine 373 contribute to the N(1)-(5-phospho-beta-D-ribosyl)glycinamide site.

The protein belongs to the PurK/PurT family. As to quaternary structure, homodimer.

It catalyses the reaction N(1)-(5-phospho-beta-D-ribosyl)glycinamide + formate + ATP = N(2)-formyl-N(1)-(5-phospho-beta-D-ribosyl)glycinamide + ADP + phosphate + H(+). It participates in purine metabolism; IMP biosynthesis via de novo pathway; N(2)-formyl-N(1)-(5-phospho-D-ribosyl)glycinamide from N(1)-(5-phospho-D-ribosyl)glycinamide (formate route): step 1/1. Involved in the de novo purine biosynthesis. Catalyzes the transfer of formate to 5-phospho-ribosyl-glycinamide (GAR), producing 5-phospho-ribosyl-N-formylglycinamide (FGAR). Formate is provided by PurU via hydrolysis of 10-formyl-tetrahydrofolate. The polypeptide is Formate-dependent phosphoribosylglycinamide formyltransferase (Burkholderia pseudomallei (strain 668)).